The sequence spans 119 residues: Small ribosomal subunit protein bS16 (119 aa).

The disordered stretch occupies residues 81-119 (GLAKRPARNNPKKAEPGQKAKERAAARAEKAGAGDDAAA). The span at 92–113 (KKAEPGQKAKERAAARAEKAGA) shows a compositional bias: basic and acidic residues.

It belongs to the bacterial ribosomal protein bS16 family.

The chain is Small ribosomal subunit protein bS16 from Methylobacterium sp. (strain 4-46).